A 517-amino-acid chain; its full sequence is DNA primase DnaG (517 aa).

In terms of domain architecture, Toprim spans 171-257 (DAIIILEGRA…CVEDLVQKEV (87 aa)). Glu177, Asp219, and Asp221 together coordinate Mg(2+).

It belongs to the archaeal DnaG primase family. As to quaternary structure, forms a ternary complex with MCM helicase and DNA. Component of the archaeal exosome complex. Requires Mg(2+) as cofactor.

The enzyme catalyses ssDNA + n NTP = ssDNA/pppN(pN)n-1 hybrid + (n-1) diphosphate.. Functionally, RNA polymerase that catalyzes the synthesis of short RNA molecules used as primers for DNA polymerase during DNA replication. Also part of the exosome, which is a complex involved in RNA degradation. Acts as a poly(A)-binding protein that enhances the interaction between heteromeric, adenine-rich transcripts and the exosome. The sequence is that of DNA primase DnaG from Methanosarcina barkeri (strain Fusaro / DSM 804).